The primary structure comprises 443 residues: Amino-acid acetyltransferase (443 aa).

One can recognise an N-acetyltransferase domain in the interval 296–434; that stretch reads EQIRRATIND…KKLMYNYQRR (139 aa).

Belongs to the acetyltransferase family. ArgA subfamily. As to quaternary structure, homohexamer.

Its subcellular location is the cytoplasm. The enzyme catalyses L-glutamate + acetyl-CoA = N-acetyl-L-glutamate + CoA + H(+). Its pathway is amino-acid biosynthesis; L-arginine biosynthesis; N(2)-acetyl-L-ornithine from L-glutamate: step 1/4. This chain is Amino-acid acetyltransferase, found in Escherichia fergusonii (strain ATCC 35469 / DSM 13698 / CCUG 18766 / IAM 14443 / JCM 21226 / LMG 7866 / NBRC 102419 / NCTC 12128 / CDC 0568-73).